Consider the following 921-residue polypeptide: Collagen alpha-1(IX) chain (921 aa).

The first 23 residues, 1 to 23, serve as a signal peptide directing secretion; that stretch reads MKNFWKISVFFCVCSCLGPWVSA. The nonhelical region (NC4) stretch occupies residues 24–268; sequence TLKRRARFPA…ITTSQTTDER (245 aa). 2 cysteine pairs are disulfide-bonded: Cys44–Cys242 and Cys198–Cys252. The Laminin G-like domain occupies 50-244; sequence GQDDLPGFDL…LQWMLIHCDP (195 aa). Residues Asp213, Asp215, and His253 each contribute to the Zn(2+) site. Disordered regions lie at residues 253-759 and 783-921; these read HELP…APTD and RPDT…GPDK. 8 consecutive Collagen-like domains span residues 269-325, 326-356, 358-403, 416-472, 473-512, 604-656, 657-711, and 712-755; these read GPPG…PGAD, GLTG…GFPG, GIPG…GTIG, PPGR…GLRG, ITGI…PPGE, GKPG…LPGP, PGLP…PGEP, and GLRG…PPGR. The triple-helical region (COL3) stretch occupies residues 269-405; sequence GPPGEQGPPG…PGPSGTIGFH (137 aa). Pro residues-rich tracts occupy residues 273–285 and 298–310; these read EQGP…PPGV and KGPP…PGDP. The span at 368–383 shows a compositional bias: low complexity; it reads TTGLPGELGRVGPIGD. Positions 387–398 are enriched in pro residues; sequence RGPPGPPGPPGP. The tract at residues 406-417 is nonhelical region (NC3); sequence DGDPLCPNSCPP. The segment at 418-756 is triple-helical region (COL2); the sequence is GRSGYPGLPG…PGIQGPPGRA (339 aa). The span at 479–489 shows a compositional bias: basic and acidic residues; the sequence is DKGEKGARGFD. Low complexity-rich tracts occupy residues 594–632 and 639–650; these read PGKP…PVGP and PGKLGSVGSPGL. Residues 757–786 form a nonhelical region (NC2) region; the sequence is PTDQHIKQVCMRVVQEHFVEMAASLKRPDT. The interval 787-901 is triple-helical region (COL1); that stretch reads GASGLPGRPG…PGPPGPPGFC (115 aa). Positions 790–847 constitute a Collagen-like 9 domain; that stretch reads GLPGRPGPPGPPGPPGENGFPGQMGIRGLPGIKGPPGALGLRGPKGDLGEKGERGPPG. Positions 794-804 are enriched in pro residues; that stretch reads RPGPPGPPGPP. Basic and acidic residues predominate over residues 833-845; sequence PKGDLGEKGERGP. The span at 888 to 900 shows a compositional bias: pro residues; sequence VPGPPGPPGPPGF. Residues 902–921 are nonhelical region (NC1); the sequence is EPASCTLQSGQRAFSKGPDK.

This sequence belongs to the fibril-associated collagens with interrupted helices (FACIT) family. In terms of assembly, heterotrimer of an alpha 1(IX), an alpha 2(IX) and an alpha 3(IX) chain. In terms of processing, covalently linked to the telopeptides of type II collagen by lysine-derived cross-links. Prolines at the third position of the tripeptide repeating unit (G-X-Y) are hydroxylated in some or all of the chains.

It localises to the secreted. The protein localises to the extracellular space. The protein resides in the extracellular matrix. In terms of biological role, structural component of hyaline cartilage and vitreous of the eye. This Mus musculus (Mouse) protein is Collagen alpha-1(IX) chain (Col9a1).